Here is a 353-residue protein sequence, read N- to C-terminus: Beta-agarase B (353 aa).

Residues 1–17 (MYLIYLRLVFCCALLLG) form the signal peptide. Residue Cys-18 is the site of N-palmitoyl cysteine attachment. Cys-18 is lipidated: S-diacylglycerol cysteine. The interval 30–58 (LPVEQEQEQETEQEGEPEESSEQDLVEEV) is disordered. Acidic residues predominate over residues 32-58 (VEQEQEQETEQEGEPEESSEQDLVEEV). One can recognise a GH16 domain in the interval 58–353 (VDWKDIPVPA…WIRIYKPVEK (296 aa)). Residues 105–107 (YHN) and Asp-181 contribute to the substrate site. The active-site Nucleophile is the Glu-184. Catalysis depends on Glu-189, which acts as the Proton donor. Substrate contacts are provided by His-215, Arg-219, Asp-224, Gln-226, and Glu-308.

It belongs to the glycosyl hydrolase 16 family. In terms of assembly, homodimer.

It is found in the cell outer membrane. The enzyme catalyses Hydrolysis of (1-&gt;4)-beta-D-galactosidic linkages in agarose, giving the tetramer as the predominant product.. Cleaves the beta-1,4-linkages between beta-D-galactose and alpha-L-3,6-anhydro-galactose residues in agarose. Cleaves agarose in a random manner with retention of the anomeric-bond configuration, producing beta-anomers that give rise progressively to alpha-anomers when mutarotation takes place. Also tolerant to hybrid substrates containing C6-sulfate groups at the -4, +1, and +3 positions. In Zobellia galactanivorans (strain DSM 12802 / CCUG 47099 / CIP 106680 / NCIMB 13871 / Dsij), this protein is Beta-agarase B (agaB).